The following is a 113-amino-acid chain: Urease subunit beta (113 aa).

This sequence belongs to the urease beta subunit family. As to quaternary structure, heterotrimer of UreA (gamma), UreB (beta) and UreC (alpha) subunits. Three heterotrimers associate to form the active enzyme.

It is found in the cytoplasm. The catalysed reaction is urea + 2 H2O + H(+) = hydrogencarbonate + 2 NH4(+). The protein operates within nitrogen metabolism; urea degradation; CO(2) and NH(3) from urea (urease route): step 1/1. The sequence is that of Urease subunit beta from Nitrosospira multiformis (strain ATCC 25196 / NCIMB 11849 / C 71).